The following is a 430-amino-acid chain: Acylsugar acyltransferase 3 (430 aa).

Catalysis depends on proton acceptor residues H155 and D367.

This sequence belongs to the plant acyltransferase family. In terms of assembly, monomer. Expressed in tip cells of type I trichomes of stems and petioles, sites of acylsugars production.

In terms of biological role, catalyzes the transfer of short (four to five carbons) branched acyl chains to the furanose ring of di-acylsucrose acceptors to produce tri-acylsucroses such as S3:15 (5,5,5), S4:17 (2,5,5,5) and S4:24 (2,5,5,12) acylsucroses. In Solanum lycopersicum (Tomato), this protein is Acylsugar acyltransferase 3.